The primary structure comprises 281 residues: Transmembrane protein 41A-A (281 aa).

An N-terminal signal peptide occupies residues 1-22 (MRSLVGLVAVIVTATFYLYSLS). Positions 32-56 (HKQSHEGETTDAKDGDEPSEMETAS) are disordered. The span at 34–47 (QSHEGETTDAKDGD) shows a compositional bias: basic and acidic residues. 5 helical membrane passes run 84–104 (GYVL…AIPG), 107–127 (FLNI…LTCV), 170–190 (LFFF…FLNM), 197–217 (IPVT…NFIC), and 236–256 (WSVV…GALI).

The protein belongs to the TMEM41 family.

It localises to the membrane. This chain is Transmembrane protein 41A-A (tmem41aa), found in Danio rerio (Zebrafish).